We begin with the raw amino-acid sequence, 408 residues long: tRNA(Ile)-lysidine synthase (408 aa).

27 to 32 (SGGGDS) is an ATP binding site.

This sequence belongs to the tRNA(Ile)-lysidine synthase family.

The protein resides in the cytoplasm. The catalysed reaction is cytidine(34) in tRNA(Ile2) + L-lysine + ATP = lysidine(34) in tRNA(Ile2) + AMP + diphosphate + H(+). In terms of biological role, ligates lysine onto the cytidine present at position 34 of the AUA codon-specific tRNA(Ile) that contains the anticodon CAU, in an ATP-dependent manner. Cytidine is converted to lysidine, thus changing the amino acid specificity of the tRNA from methionine to isoleucine. The chain is tRNA(Ile)-lysidine synthase from Caulobacter vibrioides (strain ATCC 19089 / CIP 103742 / CB 15) (Caulobacter crescentus).